The sequence spans 642 residues: MPVITLPDGSQRHYDHPVSPMDVALDIGPGLAKATIAGRVNGELVDASDLIENDATLSIITAKDEEGLEIIRHSCAHLLGHAIKQLWPHTKMAIGPVVDNGFYYDVDLDRTLTQEDVEALEKRMHELAEKNYDVIKKKVSWHEARETFVKRGESYKVSILDENIAHDDKPGLYHHEEYVDMCRGPHVPNMRFCHHFKLMKTAGAYWRGDSNNKMLQRIYGTAWADKKALNAYLQRLEEAAKRDHRKIGKQLDLYHMQEEAPGMVFWHNDGWTIFRELEVFVRSKLKEYQYQEVKGPFMMDRVLWEKTGHWDNYKDAMFTTSSENREYCIKPMNCPGHVQIFNQGLKSYRDLPLRMAEFGSCHRNEPSGALHGLMRVRGFTQDDAHIFCTEEQIRDEVNACIRMVYDMYSTFGFEKIVVKLSTRPDKRIGSDEMWDRAEADLAVALEENNIPFEYQLGEGAFYGPKIEFTLYDCLDRAWQCGTVQLDFSLPSRLSASYVGEDNERKVPVMIHRAILGSMERFIGILTEEFAGFFPTWLAPVQVVVMNITDSQSEYVNELTQKLQNAGIRVKADLRNEKIGFKIREHTLRRVPYMLVCGDKEVEAGKVAVRTRRGKDLGSLDVNDVIEKLQQEIRSRSLQQLEE.

Residues 1–61 (MPVITLPDGS…ENDATLSIIT (61 aa)) enclose the TGS domain. Positions 243–534 (DHRKIGKQLD…LTEEFAGFFP (292 aa)) are catalytic. Zn(2+) contacts are provided by Cys334, His385, and His511.

Belongs to the class-II aminoacyl-tRNA synthetase family. In terms of assembly, homodimer. The cofactor is Zn(2+).

The protein resides in the cytoplasm. It carries out the reaction tRNA(Thr) + L-threonine + ATP = L-threonyl-tRNA(Thr) + AMP + diphosphate + H(+). Functionally, catalyzes the attachment of threonine to tRNA(Thr) in a two-step reaction: L-threonine is first activated by ATP to form Thr-AMP and then transferred to the acceptor end of tRNA(Thr). Also edits incorrectly charged L-seryl-tRNA(Thr). This Salmonella agona (strain SL483) protein is Threonine--tRNA ligase.